Reading from the N-terminus, the 112-residue chain is Phosphoribosyl-AMP cyclohydrolase (112 aa).

Residue Asp76 participates in Mg(2+) binding. Zn(2+) is bound at residue Cys77. The Mg(2+) site is built by Asp78 and Asp80. Zn(2+)-binding residues include Cys93 and Cys100.

Belongs to the PRA-CH family. As to quaternary structure, homodimer. Mg(2+) is required as a cofactor. Requires Zn(2+) as cofactor.

The protein resides in the cytoplasm. It carries out the reaction 1-(5-phospho-beta-D-ribosyl)-5'-AMP + H2O = 1-(5-phospho-beta-D-ribosyl)-5-[(5-phospho-beta-D-ribosylamino)methylideneamino]imidazole-4-carboxamide. The protein operates within amino-acid biosynthesis; L-histidine biosynthesis; L-histidine from 5-phospho-alpha-D-ribose 1-diphosphate: step 3/9. Its function is as follows. Catalyzes the hydrolysis of the adenine ring of phosphoribosyl-AMP. The protein is Phosphoribosyl-AMP cyclohydrolase of Streptococcus thermophilus (strain ATCC BAA-491 / LMD-9).